The sequence spans 96 residues: C-C motif chemokine 20 (96 aa).

The first 26 residues, 1–26, serve as a signal peptide directing secretion; that stretch reads MACKHLPFLALAGVLLAYLCSQSEAA. 2 disulfides stabilise this stretch: cysteine 31/cysteine 58 and cysteine 32/cysteine 74.

Belongs to the intercrine beta (chemokine CC) family. In terms of tissue distribution, low levels in thymus and lung.

It localises to the secreted. Functionally, acts as a ligand for C-C chemokine receptor CCR6. Signals through binding and activation of CCR6 and induces a strong chemotactic response and mobilization of intracellular calcium ions. The ligand-receptor pair CCL20-CCR6 is responsible for the chemotaxis of dendritic cells (DC), effector/memory T-cells and B-cells and plays an important role at skin and mucosal surfaces under homeostatic and inflammatory conditions, as well as in pathology, including cancer and autoimmune diseases. CCL20 acts as a chemotactic factor that attracts lymphocytes and, slightly, neutrophils, but not monocytes. Involved in the recruitment of both the pro-inflammatory IL17 producing helper T-cells (Th17) and the regulatory T-cells (Treg) to sites of inflammation. Required for optimal migration of thymic natural regulatory T cells (nTregs) and DN1 early thymocyte progenitor cells. Positively regulates sperm motility and chemotaxis via its binding to CCR6 which triggers Ca2+ mobilization in the sperm which is important for its motility. May be involved in formation and function of the mucosal lymphoid tissues by attracting lymphocytes and dendritic cells towards epithelial cells. In Rattus norvegicus (Rat), this protein is C-C motif chemokine 20 (Ccl20).